A 226-amino-acid chain; its full sequence is ATP synthase subunit a (226 aa).

The next 5 helical transmembrane spans lie at 18–38 (LSLN…SYWL), 74–94 (FISL…PYIF), 100–120 (LTLT…YGWI), 158–180 (LAVR…GNTG), and 197–217 (IALL…FAVL).

This sequence belongs to the ATPase A chain family. In terms of assembly, F-type ATPases have 2 components, CF(1) - the catalytic core - and CF(0) - the membrane proton channel. CF(1) has five subunits: alpha(3), beta(3), gamma(1), delta(1), epsilon(1). CF(0) has three main subunits: a, b and c.

It localises to the mitochondrion inner membrane. Mitochondrial membrane ATP synthase (F(1)F(0) ATP synthase or Complex V) produces ATP from ADP in the presence of a proton gradient across the membrane which is generated by electron transport complexes of the respiratory chain. F-type ATPases consist of two structural domains, F(1) - containing the extramembraneous catalytic core and F(0) - containing the membrane proton channel, linked together by a central stalk and a peripheral stalk. During catalysis, ATP synthesis in the catalytic domain of F(1) is coupled via a rotary mechanism of the central stalk subunits to proton translocation. Key component of the proton channel; it may play a direct role in the translocation of protons across the membrane. This Anopheles gambiae (African malaria mosquito) protein is ATP synthase subunit a (mt:ATPase6).